Consider the following 594-residue polypeptide: Actin-histidine N-methyltransferase (594 aa).

The disordered stretch occupies residues 1–23 (MGKKSRVKTQKSGTGATASVSPK). Polar residues predominate over residues 10-23 (QKSGTGATASVSPK). S-adenosyl-L-methionine contacts are provided by residues Arg-75, 104–106 (EGF), Arg-254, 275–279 (DMCNH), and 325–327 (SGF). An SET domain is found at 94–314 (EGFEMVSFKE…AGEQIYIFYG (221 aa)). Residues 553-594 (INGENSIPNGTRLEKEDLNQEQSKRVTEDAKEPSDSTEEVKE) form a disordered region. Over residues 564–594 (RLEKEDLNQEQSKRVTEDAKEPSDSTEEVKE) the composition is skewed to basic and acidic residues.

Belongs to the class V-like SAM-binding methyltransferase superfamily. SETD3 actin-histidine methyltransferase family. Interacts with MYOD1. Phosphorylated by GSK3B, which is required for recognition by the SCF(FBXW7) complex and subsequent degradation. In terms of processing, ubiquitinated by the SCF(FBXW7) complex following phosphorylation by GSK3B, leading to its degradation by the proteasome.

The protein resides in the cytoplasm. It localises to the nucleus. It carries out the reaction L-histidyl-[protein] + S-adenosyl-L-methionine = N(tele)-methyl-L-histidyl-[protein] + S-adenosyl-L-homocysteine + H(+). In terms of biological role, protein-histidine N-methyltransferase that specifically mediates 3-methylhistidine (tele-methylhistidine) methylation of actin at 'His-73'. Histidine methylation of actin is required for smooth muscle contraction of the laboring uterus during delivery. Does not have protein-lysine N-methyltransferase activity and probably only catalyzes histidine methylation of actin. In Rhinolophus ferrumequinum (Greater horseshoe bat), this protein is Actin-histidine N-methyltransferase.